Here is a 412-residue protein sequence, read N- to C-terminus: CCA-adding enzyme (412 aa).

ATP is bound by residues serine 41 and lysine 44. Residues serine 41 and lysine 44 each contribute to the CTP site. Aspartate 53, aspartate 55, and aspartate 106 together coordinate Mg(2+). Residues histidine 129, lysine 149, and tyrosine 158 each contribute to the ATP site. Residues histidine 129, lysine 149, and tyrosine 158 each coordinate CTP.

Belongs to the tRNA nucleotidyltransferase/poly(A) polymerase family. Archaeal CCA-adding enzyme subfamily. As to quaternary structure, homodimer. Forms a tetramer upon binding two tRNAs. However, tRNA-induced tetramer formation is not required for CCA addition. Requires Mg(2+) as cofactor.

It carries out the reaction a tRNA precursor + 2 CTP + ATP = a tRNA with a 3' CCA end + 3 diphosphate. The catalysed reaction is a tRNA with a 3' CCA end + 2 CTP + ATP = a tRNA with a 3' CCACCA end + 3 diphosphate. Its function is as follows. Catalyzes the addition and repair of the essential 3'-terminal CCA sequence in tRNAs without using a nucleic acid template. Adds these three nucleotides in the order of C, C, and A to the tRNA nucleotide-73, using CTP and ATP as substrates and producing inorganic pyrophosphate. tRNA 3'-terminal CCA addition is required both for tRNA processing and repair. Also involved in tRNA surveillance by mediating tandem CCA addition to generate a CCACCA at the 3' terminus of unstable tRNAs. While stable tRNAs receive only 3'-terminal CCA, unstable tRNAs are marked with CCACCA and rapidly degraded. The structural flexibility of RNA controls the choice between CCA versus CCACCA addition: following the first CCA addition cycle, nucleotide-binding to the active site triggers a clockwise screw motion, producing torque on the RNA. This ejects stable RNAs, whereas unstable RNAs are refolded while bound to the enzyme and subjected to a second CCA catalytic cycle. In Saccharolobus shibatae (strain ATCC 51178 / DSM 5389 / JCM 8931 / NBRC 15437 / B12) (Sulfolobus shibatae), this protein is CCA-adding enzyme.